Consider the following 372-residue polypeptide: Chaperone protein DnaJ (372 aa).

A J domain is found at 5 to 69 (DYYEVLGVSK…DKRKQYDQFG (65 aa)). Residues 139–221 (GVDKIIELDL…CKGKGKYLER (83 aa)) form a CR-type zinc finger. Zn(2+) is bound by residues C152, C155, C169, C172, C195, C198, C209, and C212. 4 CXXCXGXG motif repeats span residues 152-159 (CSACFGSG), 169-176 (CNNCHGTG), 195-202 (CNVCNGAG), and 209-216 (CKNCKGKG).

It belongs to the DnaJ family. As to quaternary structure, homodimer. It depends on Zn(2+) as a cofactor.

It is found in the cytoplasm. Its function is as follows. Participates actively in the response to hyperosmotic and heat shock by preventing the aggregation of stress-denatured proteins and by disaggregating proteins, also in an autonomous, DnaK-independent fashion. Unfolded proteins bind initially to DnaJ; upon interaction with the DnaJ-bound protein, DnaK hydrolyzes its bound ATP, resulting in the formation of a stable complex. GrpE releases ADP from DnaK; ATP binding to DnaK triggers the release of the substrate protein, thus completing the reaction cycle. Several rounds of ATP-dependent interactions between DnaJ, DnaK and GrpE are required for fully efficient folding. Also involved, together with DnaK and GrpE, in the DNA replication of plasmids through activation of initiation proteins. The protein is Chaperone protein DnaJ of Mycoplasma capricolum subsp. capricolum (strain California kid / ATCC 27343 / NCTC 10154).